The following is a 273-amino-acid chain: Formamidopyrimidine-DNA glycosylase (273 aa).

The active-site Schiff-base intermediate with DNA is Pro2. Glu3 functions as the Proton donor in the catalytic mechanism. Catalysis depends on Lys59, which acts as the Proton donor; for beta-elimination activity. 2 residues coordinate DNA: His92 and Arg111. An FPG-type zinc finger spans residues Lys239–Lys273. Arg263 serves as the catalytic Proton donor; for delta-elimination activity.

Belongs to the FPG family. Monomer. Requires Zn(2+) as cofactor.

The enzyme catalyses Hydrolysis of DNA containing ring-opened 7-methylguanine residues, releasing 2,6-diamino-4-hydroxy-5-(N-methyl)formamidopyrimidine.. The catalysed reaction is 2'-deoxyribonucleotide-(2'-deoxyribose 5'-phosphate)-2'-deoxyribonucleotide-DNA = a 3'-end 2'-deoxyribonucleotide-(2,3-dehydro-2,3-deoxyribose 5'-phosphate)-DNA + a 5'-end 5'-phospho-2'-deoxyribonucleoside-DNA + H(+). In terms of biological role, involved in base excision repair of DNA damaged by oxidation or by mutagenic agents. Acts as a DNA glycosylase that recognizes and removes damaged bases. Has a preference for oxidized purines, such as 7,8-dihydro-8-oxoguanine (8-oxoG). Has AP (apurinic/apyrimidinic) lyase activity and introduces nicks in the DNA strand. Cleaves the DNA backbone by beta-delta elimination to generate a single-strand break at the site of the removed base with both 3'- and 5'-phosphates. This is Formamidopyrimidine-DNA glycosylase from Listeria monocytogenes serovar 1/2a (strain ATCC BAA-679 / EGD-e).